Reading from the N-terminus, the 874-residue chain is Rho GTPase-activating protein 42 (874 aa).

Residues 7 to 262 (EFSDSYLDSP…MKSANQDYRP (256 aa)) enclose the BAR domain. Residues 225–261 (KQQLQFNLQNTRNNFESTRQEVERLMQRMKSANQDYR) are a coiled coil. The PH domain maps to 265 to 374 (QWTMEGYLYV…WLEAMDGKEP (110 aa)). Phosphotyrosine is present on Tyr376. The Rho-GAP domain occupies 376-572 (YTLPAIISKK…ILIEHYEKIF (197 aa)). The tract at residues 575 to 720 (APDPSIPLPQ…GDVSPPIDLV (146 aa)) is disordered. The span at 620–650 (DSYSSSPDSTPMGSIESLSSHSSEQNSTTKS) shows a compositional bias: low complexity. Polar residues predominate over residues 667 to 686 (TPSSSNGQKSLGLWTTSPES). At Ser683 the chain carries Phosphoserine. The segment covering 687-697 (SSREDATKTDA) has biased composition (basic and acidic residues). A compositionally biased stretch (polar residues) spans 700–711 (DCQSVASVTSPG). Phosphoserine is present on residues Ser740, Ser753, Ser756, and Ser811. The segment covering 749-762 (SYSGSIQSLTSVGS) has biased composition (polar residues). The segment at 749–777 (SYSGSIQSLTSVGSKETPKASPNPDLPPK) is disordered. The 59-residue stretch at 816–874 (SSGRQAKAMYSCKAEHSHELSFPQGAIFSNVYPSVEPGWLKATYEGKTGLVPENYVVFL) folds into the SH3 domain. Position 870 is a phosphotyrosine (Tyr870).

As to expression, highly and selectively expressed in smooth muscle cells.

Its function is as follows. May influence blood pressure by functioning as a GTPase-activating protein for RHOA in vascular smooth muscle. This Homo sapiens (Human) protein is Rho GTPase-activating protein 42.